The sequence spans 47 residues: Potassium channel toxin alpha-KTx 7.1 (47 aa).

Positions 1–12 (RGSVDYKDDDDK) are cleaved as a signal peptide. 3 disulfides stabilise this stretch: Cys16–Cys37, Cys22–Cys42, and Cys26–Cys44.

The protein belongs to the short scorpion toxin superfamily. Potassium channel inhibitor family. Alpha-KTx 07 subfamily. Expressed by the venom gland.

Its subcellular location is the secreted. Its function is as follows. Potent inhibitor of the A-type voltage-gated potassium channels. Most potent inhibitor of Kv1.2/KCNA2 channels. Reversibly block the Shaker B potassium-channels (Kv1.1 sub-family). This chain is Potassium channel toxin alpha-KTx 7.1 (PTX-1), found in Pandinus imperator (Emperor scorpion).